Here is a 494-residue protein sequence, read N- to C-terminus: Ketol-acid reductoisomerase (NADP(+)) (494 aa).

The region spanning 14–208 (LDQLGRCRFM…GGHRAGCLES (195 aa)) is the KARI N-terminal Rossmann domain. Residues 45-48 (CGAQ), Arg-68, Arg-76, Ser-78, and 108-110 (DKQ) contribute to the NADP(+) site. His-132 is an active-site residue. Position 158 (Gly-158) interacts with NADP(+). KARI C-terminal knotted domains are found at residues 209–344 (SFVA…NYPD) and 345–487 (SSLE…MTDM). Residues Asp-217, Glu-221, Glu-389, and Glu-393 each contribute to the Mg(2+) site. Ser-414 is a binding site for substrate.

Belongs to the ketol-acid reductoisomerase family. Mg(2+) is required as a cofactor.

It catalyses the reaction (2R)-2,3-dihydroxy-3-methylbutanoate + NADP(+) = (2S)-2-acetolactate + NADPH + H(+). The catalysed reaction is (2R,3R)-2,3-dihydroxy-3-methylpentanoate + NADP(+) = (S)-2-ethyl-2-hydroxy-3-oxobutanoate + NADPH + H(+). It functions in the pathway amino-acid biosynthesis; L-isoleucine biosynthesis; L-isoleucine from 2-oxobutanoate: step 2/4. The protein operates within amino-acid biosynthesis; L-valine biosynthesis; L-valine from pyruvate: step 2/4. Involved in the biosynthesis of branched-chain amino acids (BCAA). Catalyzes an alkyl-migration followed by a ketol-acid reduction of (S)-2-acetolactate (S2AL) to yield (R)-2,3-dihydroxy-isovalerate. In the isomerase reaction, S2AL is rearranged via a Mg-dependent methyl migration to produce 3-hydroxy-3-methyl-2-ketobutyrate (HMKB). In the reductase reaction, this 2-ketoacid undergoes a metal-dependent reduction by NADPH to yield (R)-2,3-dihydroxy-isovalerate. The protein is Ketol-acid reductoisomerase (NADP(+)) of Aliivibrio salmonicida (strain LFI1238) (Vibrio salmonicida (strain LFI1238)).